A 507-amino-acid chain; its full sequence is Bifunctional purine biosynthesis protein PurH (507 aa).

In terms of domain architecture, MGS-like spans 1-144 (MKRALLSVSD…KNSDSVWAVV (144 aa)).

This sequence belongs to the PurH family.

It catalyses the reaction (6R)-10-formyltetrahydrofolate + 5-amino-1-(5-phospho-beta-D-ribosyl)imidazole-4-carboxamide = 5-formamido-1-(5-phospho-D-ribosyl)imidazole-4-carboxamide + (6S)-5,6,7,8-tetrahydrofolate. The catalysed reaction is IMP + H2O = 5-formamido-1-(5-phospho-D-ribosyl)imidazole-4-carboxamide. Its pathway is purine metabolism; IMP biosynthesis via de novo pathway; 5-formamido-1-(5-phospho-D-ribosyl)imidazole-4-carboxamide from 5-amino-1-(5-phospho-D-ribosyl)imidazole-4-carboxamide (10-formyl THF route): step 1/1. The protein operates within purine metabolism; IMP biosynthesis via de novo pathway; IMP from 5-formamido-1-(5-phospho-D-ribosyl)imidazole-4-carboxamide: step 1/1. This Lacticaseibacillus casei (strain BL23) (Lactobacillus casei) protein is Bifunctional purine biosynthesis protein PurH.